The chain runs to 101 residues: Large ribosomal subunit protein uL24 (101 aa).

It belongs to the universal ribosomal protein uL24 family. Part of the 50S ribosomal subunit.

In terms of biological role, one of two assembly initiator proteins, it binds directly to the 5'-end of the 23S rRNA, where it nucleates assembly of the 50S subunit. Its function is as follows. One of the proteins that surrounds the polypeptide exit tunnel on the outside of the subunit. The protein is Large ribosomal subunit protein uL24 of Clostridioides difficile (strain 630) (Peptoclostridium difficile).